The sequence spans 421 residues: Acetylglutamate kinase (421 aa).

Residues 1-252 (MASTKEISQY…PLESSVSITR (252 aa)) form an acetylglutamate kinase region. Substrate is bound by residues 59–60 (AG), Arg-81, and Asn-170. One can recognise an N-acetyltransferase domain in the interval 274–420 (ERVIRATTWK…HCAQHPPTLI (147 aa)).

It in the N-terminal section; belongs to the acetylglutamate kinase family. ArgB subfamily.

The protein resides in the cytoplasm. It carries out the reaction N-acetyl-L-glutamate + ATP = N-acetyl-L-glutamyl 5-phosphate + ADP. Its pathway is amino-acid biosynthesis; L-arginine biosynthesis; N(2)-acetyl-L-ornithine from L-glutamate: step 2/4. The protein is Acetylglutamate kinase (argB) of Xylella fastidiosa (strain 9a5c).